Reading from the N-terminus, the 151-residue chain is Small ribosomal subunit protein uS15y (151 aa).

This sequence belongs to the universal ribosomal protein uS15 family.

This Arabidopsis thaliana (Mouse-ear cress) protein is Small ribosomal subunit protein uS15y (RPS13B).